A 292-amino-acid chain; its full sequence is Elongation factor Ts (292 aa).

The tract at residues 80–83 (TDFV) is involved in Mg(2+) ion dislocation from EF-Tu.

It belongs to the EF-Ts family.

Its subcellular location is the cytoplasm. Associates with the EF-Tu.GDP complex and induces the exchange of GDP to GTP. It remains bound to the aminoacyl-tRNA.EF-Tu.GTP complex up to the GTP hydrolysis stage on the ribosome. This Mycoplasmopsis synoviae (strain 53) (Mycoplasma synoviae) protein is Elongation factor Ts.